The chain runs to 880 residues: Alanine--tRNA ligase (880 aa).

Zn(2+) contacts are provided by His-571, His-575, Cys-673, and His-677.

This sequence belongs to the class-II aminoacyl-tRNA synthetase family. Zn(2+) serves as cofactor.

It is found in the cytoplasm. It carries out the reaction tRNA(Ala) + L-alanine + ATP = L-alanyl-tRNA(Ala) + AMP + diphosphate. Catalyzes the attachment of alanine to tRNA(Ala) in a two-step reaction: alanine is first activated by ATP to form Ala-AMP and then transferred to the acceptor end of tRNA(Ala). Also edits incorrectly charged Ser-tRNA(Ala) and Gly-tRNA(Ala) via its editing domain. This Oleidesulfovibrio alaskensis (strain ATCC BAA-1058 / DSM 17464 / G20) (Desulfovibrio alaskensis) protein is Alanine--tRNA ligase.